Consider the following 307-residue polypeptide: Ornithine carbamoyltransferase (307 aa).

Residues 51–54 (STRT), Gln-78, Arg-102, and 129–132 (HPCQ) each bind carbamoyl phosphate. Residues Asn-160, Asp-220, and 224–225 (SM) contribute to the L-ornithine site. Carbamoyl phosphate is bound by residues 260–261 (CL) and Arg-288.

The protein belongs to the aspartate/ornithine carbamoyltransferase superfamily. OTCase family.

Its subcellular location is the cytoplasm. The enzyme catalyses carbamoyl phosphate + L-ornithine = L-citrulline + phosphate + H(+). The protein operates within amino-acid biosynthesis; L-arginine biosynthesis; L-arginine from L-ornithine and carbamoyl phosphate: step 1/3. Its function is as follows. Reversibly catalyzes the transfer of the carbamoyl group from carbamoyl phosphate (CP) to the N(epsilon) atom of ornithine (ORN) to produce L-citrulline. This is Ornithine carbamoyltransferase (argF) from Archaeoglobus fulgidus (strain ATCC 49558 / DSM 4304 / JCM 9628 / NBRC 100126 / VC-16).